The sequence spans 271 residues: Norsolorinic acid ketoreductase (271 aa).

The tract at residues 1–22 is disordered; the sequence is MNGSLSQHDQERLSTPYRDGPP. NADP(+) contacts are provided by Ile36, Asn112, Tyr185, Lys189, Val216, and Thr218. The active-site Proton donor is the Tyr185. Lys189 acts as the Lowers pKa of active site Tyr in catalysis.

Belongs to the short-chain dehydrogenases/reductases (SDR) family.

It localises to the cytoplasm. It is found in the cytosol. The protein resides in the vacuole. The enzyme catalyses (1'S)-averantin + NADP(+) = norsolorinic acid + NADPH + H(+). It participates in mycotoxin biosynthesis; aflatoxin biosynthesis. In terms of biological role, norsolorinic acid ketoreductase; part of the gene cluster that mediates the biosynthesis of aflatoxins, a group of polyketide-derived furanocoumarins, and part of the most toxic and carcinogenic compounds among the known mycotoxins. The four major aflatoxins produced by A.parasiticus are aflatoxin B1 (AFB1), aflatoxin B2 (AFB2), aflatoxin G1 (AFG1) and aflatoxin G2 (AFG2). Within the aflatoxin pathway, the norsolorinic acid ketoreductase aflD performs the second step by catalyzing the dehydration of norsolorinic acid (NOR) to form (1'S)-averantin (AVN). The biosynthesis of aflatoxins begins with the norsolorinic acid synthase aflC that combines a hexanoyl starter unit produced by the fatty acid synthase aflA/aflB and 7 malonyl-CoA extender units to synthesize the precursor NOR. The second step is the conversion of NOR to averantin and requires the norsolorinic acid ketoreductase aflD, which catalyzes the dehydration of norsolorinic acid to form (1'S)-averantin. The norsolorinic acid reductases aflE and aflF may also play a role in the conversion of NOR to AVN. The cytochrome P450 monooxygenase aflG then catalyzes the hydroxylation of AVN to 5'hydroxyaverantin (HAVN). The next step is performed by the 5'-hydroxyaverantin dehydrogenase aflH that transforms HAVN to 5'-oxoaverantin (OAVN) which is further converted to averufin (AVF) by aflK that plays a dual role in the pathway, as a 5'-oxoaverantin cyclase that mediates conversion of 5'-oxoaverantin, as well as a versicolorin B synthase in a later step in the pathway. The averufin oxidase aflI catalyzes the conversion of AVF to versiconal hemiacetal acetate (VHA). VHA is then the substrate for the versiconal hemiacetal acetate esterase aflJ to yield versiconal (VAL). Versicolorin B synthase aflK then converts VAL to versicolorin B (VERB) by closing the bisfuran ring of aflatoxin which is required for DNA-binding, thus giving to aflatoxin its activity as a mutagen. Then, the activity of the versicolorin B desaturase aflL leads to versicolorin A (VERA). A branch point starts from VERB since it can also be converted to dihydrodemethylsterigmatocystin (DMDHST), probably also by aflL, VERA being a precursor for aflatoxins B1 and G1, and DMDHST for aflatoxins B2 and G2. Next, the versicolorin reductase aflM and the cytochrome P450 monooxygenase aflN are involved in conversion of VERA to demethylsterigmatocystin (DMST). AflX and aflY seem also involved in this step, through probable aflX-mediated epoxide ring-opening step following versicolorin A oxidation and aflY-mediated Baeyer-Villiger oxidation required for the formation of the xanthone ring. The methyltransferase aflO then leads to the modification of DMST to sterigmatocystin (ST), and of DMDHST to dihydrosterigmatocystin (DHST). Both ST and DHST are then substrates of the O-methyltransferase aflP to yield O-methylsterigmatocystin (OMST) and dihydro-O-methylsterigmatocystin (DHOMST), respectively. Finally OMST is converted to aflatoxins B1 and G1, and DHOMST to aflatoxins B2 and G2, via the action of several enzymes including O-methylsterigmatocystin oxidoreductase aflQ, the cytochrome P450 monooxygenase aflU, but also the NADH-dependent flavin oxidoreductase nadA which is specifically required for the synthesis of AFG1. In Aspergillus parasiticus (strain ATCC 56775 / NRRL 5862 / SRRC 143 / SU-1), this protein is Norsolorinic acid ketoreductase.